The chain runs to 558 residues: Potassium-transporting ATPase potassium-binding subunit (558 aa).

12 helical membrane-spanning segments follow: residues 1 to 21 (MSIV…SRYL), 60 to 80 (IKHF…LLLI), 129 to 149 (VITF…IAML), 169 to 189 (FIVR…ISQG), 246 to 266 (WSNY…VFLF), 281 to 301 (IMIF…CLYF), 326 to 346 (FGIG…TGTV), 353 to 373 (LTPL…VFGG), 376 to 396 (VGLM…SLMI), 415 to 435 (IALS…LAFI), 485 to 505 (IVML…VSSL), and 523 to 543 (LFFS…TFLP).

This sequence belongs to the KdpA family. In terms of assembly, the system is composed of three essential subunits: KdpA, KdpB and KdpC.

It is found in the cell membrane. Part of the high-affinity ATP-driven potassium transport (or Kdp) system, which catalyzes the hydrolysis of ATP coupled with the electrogenic transport of potassium into the cytoplasm. This subunit binds the extracellular potassium ions and delivers the ions to the membrane domain of KdpB through an intramembrane tunnel. The polypeptide is Potassium-transporting ATPase potassium-binding subunit (Staphylococcus haemolyticus (strain JCSC1435)).